The sequence spans 179 residues: Inner membrane-spanning protein YciB (179 aa).

5 helical membrane passes run 22–42 (IYAA…YSWV), 50–70 (MALI…FFHN), 76–96 (WKVT…QWVM), 121–141 (LAWA…AFWL), and 149–169 (FKVF…GIYI).

This sequence belongs to the YciB family.

The protein resides in the cell inner membrane. In terms of biological role, plays a role in cell envelope biogenesis, maintenance of cell envelope integrity and membrane homeostasis. The sequence is that of Inner membrane-spanning protein YciB from Klebsiella pneumoniae (strain 342).